The primary structure comprises 457 residues: Siroheme synthase 2 (457 aa).

The tract at residues 1 to 204 is precorrin-2 dehydrogenase /sirohydrochlorin ferrochelatase; sequence MDHLPIFCQL…DDEQAVTRIT (204 aa). NAD(+)-binding positions include 22-23 and 43-44; these read DV and LA. Ser-128 bears the Phosphoserine mark. The interval 216–457 is uroporphyrinogen-III C-methyltransferase; it reads GEVVLVGAGP…RDKLNWFSSK (242 aa). S-adenosyl-L-methionine is bound at residue Pro-225. The Proton acceptor role is filled by Asp-248. Catalysis depends on Lys-270, which acts as the Proton donor. Residues 301-303, Ile-306, 331-332, Met-382, and Gly-411 contribute to the S-adenosyl-L-methionine site; these read GGD and TA.

It in the N-terminal section; belongs to the precorrin-2 dehydrogenase / sirohydrochlorin ferrochelatase family. The protein in the C-terminal section; belongs to the precorrin methyltransferase family.

The catalysed reaction is uroporphyrinogen III + 2 S-adenosyl-L-methionine = precorrin-2 + 2 S-adenosyl-L-homocysteine + H(+). The enzyme catalyses precorrin-2 + NAD(+) = sirohydrochlorin + NADH + 2 H(+). It carries out the reaction siroheme + 2 H(+) = sirohydrochlorin + Fe(2+). It participates in cofactor biosynthesis; adenosylcobalamin biosynthesis; precorrin-2 from uroporphyrinogen III: step 1/1. Its pathway is cofactor biosynthesis; adenosylcobalamin biosynthesis; sirohydrochlorin from precorrin-2: step 1/1. It functions in the pathway porphyrin-containing compound metabolism; siroheme biosynthesis; precorrin-2 from uroporphyrinogen III: step 1/1. The protein operates within porphyrin-containing compound metabolism; siroheme biosynthesis; siroheme from sirohydrochlorin: step 1/1. It participates in porphyrin-containing compound metabolism; siroheme biosynthesis; sirohydrochlorin from precorrin-2: step 1/1. Its function is as follows. Multifunctional enzyme that catalyzes the SAM-dependent methylations of uroporphyrinogen III at position C-2 and C-7 to form precorrin-2 via precorrin-1. Then it catalyzes the NAD-dependent ring dehydrogenation of precorrin-2 to yield sirohydrochlorin. Finally, it catalyzes the ferrochelation of sirohydrochlorin to yield siroheme. The polypeptide is Siroheme synthase 2 (Cronobacter sakazakii (strain ATCC BAA-894) (Enterobacter sakazakii)).